Consider the following 192-residue polypeptide: Der GTPase-activating protein YihI (192 aa).

The segment at 1 to 80 (MSRTKKTRRI…KAAVKEVKDP (80 aa)) is disordered. Composition is skewed to basic and acidic residues over residues 9 to 25 (RITDIMPARKADKKPEQ), 37 to 48 (TRYELDAKAREE), and 65 to 80 (DPAEQKKAAVKEVKDP).

It belongs to the YihI family. In terms of assembly, interacts with Der.

Functionally, a GTPase-activating protein (GAP) that modifies Der/EngA GTPase function. May play a role in ribosome biogenesis. The sequence is that of Der GTPase-activating protein YihI from Actinobacillus pleuropneumoniae serotype 5b (strain L20).